Consider the following 312-residue polypeptide: MADAPRTVLISGCSSGIGLELAVQLAHDPRQRYQVVATMRDLGKKGTLETAAGEALGQTLTVAQLDVCSDESVAQCLNCIQGGEVDVLVNNAGVGLVGPLEGLSLAAMQNVFDTNFFGAVRLVKAVLPSMKRRRQGHIVVVSSVMGLQGVVFNEVYAASKFAMEGFFESLAVQLLQFNIFISLVEPGPVVTEFEGKLLEQVSTAEFPGTDPDTLSYFRDLYLPASRELFHNVGQSPQDVAKVIVKVIGSARPPLRRRTNTRYTPLIALKAMDPSGSLYVRTSHCLLFRWPRLLNLGLRCLACSCFRTPVWPR.

9 to 18 (LISGCSSGIG) is an NADP(+) binding site. The next 3 membrane-spanning stretches (helical) occupy residues 87-107 (VLVN…SLAA), 138-158 (IVVV…VYAA), and 170-190 (LAVQ…GPVV). Ser-143 serves as a coordination point for substrate. Catalysis depends on Tyr-156, which acts as the Proton acceptor.

Belongs to the short-chain dehydrogenases/reductases (SDR) family. In terms of tissue distribution, detected in photoreceptor outer segments in the retina (at protein level).

The protein resides in the membrane. The catalysed reaction is all-trans-retinol + NADP(+) = all-trans-retinal + NADPH + H(+). In terms of biological role, retinol dehydrogenase with a clear preference for NADP. Converts all-trans-retinal to all-trans-retinol. May play a role in the regeneration of visual pigment at high light intensity. The chain is Retinol dehydrogenase 8 (RDH8) from Bos taurus (Bovine).